The sequence spans 163 residues: Ribosome maturation factor RimM (163 aa).

A PRC barrel domain is found at 94–162 (ADEYYYIDLI…DHLVIAADFI (69 aa)).

It belongs to the RimM family. In terms of assembly, binds ribosomal protein uS19.

It is found in the cytoplasm. Functionally, an accessory protein needed during the final step in the assembly of 30S ribosomal subunit, possibly for assembly of the head region. Essential for efficient processing of 16S rRNA. May be needed both before and after RbfA during the maturation of 16S rRNA. It has affinity for free ribosomal 30S subunits but not for 70S ribosomes. The polypeptide is Ribosome maturation factor RimM (Zymomonas mobilis subsp. mobilis (strain ATCC 31821 / ZM4 / CP4)).